We begin with the raw amino-acid sequence, 70 residues long: Translational regulator CsrA (70 aa).

This sequence belongs to the CsrA/RsmA family. In terms of assembly, homodimer; the beta-strands of each monomer intercalate to form a hydrophobic core, while the alpha-helices form wings that extend away from the core.

The protein localises to the cytoplasm. In terms of biological role, a translational regulator that binds mRNA to regulate translation initiation and/or mRNA stability. Usually binds in the 5'-UTR at or near the Shine-Dalgarno sequence preventing ribosome-binding, thus repressing translation. Its main target seems to be the major flagellin gene, while its function is anatagonized by FliW. The sequence is that of Translational regulator CsrA from Clostridioides difficile (strain 630) (Peptoclostridium difficile).